Reading from the N-terminus, the 131-residue chain is Fumarate reductase subunit C (131 aa).

The next 3 membrane-spanning stretches (helical) occupy residues 30 to 50 (EGTCLPQLWFSLVVLFGVFAL), 58 to 78 (AGFVGFLSNPIVMLINIVTLI), and 109 to 129 (IVRGLWGLTIVVTVVILAVAL).

The protein belongs to the FrdC family. In terms of assembly, part of an enzyme complex containing four subunits: a flavoprotein (FrdA), an iron-sulfur protein (FrdB), and two hydrophobic anchor proteins (FrdC and FrdD).

It is found in the cell inner membrane. Two distinct, membrane-bound, FAD-containing enzymes are responsible for the catalysis of fumarate and succinate interconversion; fumarate reductase is used in anaerobic growth, and succinate dehydrogenase is used in aerobic growth. Anchors the catalytic components of the fumarate reductase complex to the cell inner membrane, binds quinones. This Proteus mirabilis (strain HI4320) protein is Fumarate reductase subunit C.